Reading from the N-terminus, the 535-residue chain is uncharacterized protein (535 aa).

6 helical membrane passes run 63–83, 90–110, 143–163, 168–188, 226–246, and 258–278; these read LTGI…PSIY, VTFG…TYWI, VAAV…TLYG, VFVT…ATNC, SLGS…VLLV, and VLIL…ILAW. An HAMP domain is found at 279 to 330; the sequence is LTAAPVRVVRAALKRVEQGDLRGDLVVFDGTELGELQRGFNAMVNGLRERER. Residues 362-486 form the Guanylate cyclase domain; the sequence is AVVFVDIVGS…KPVNQAARLC (125 aa).

It belongs to the adenylyl cyclase class-3 family.

The protein localises to the cell membrane. This is an uncharacterized protein from Mycobacterium tuberculosis (strain ATCC 25618 / H37Rv).